Consider the following 447-residue polypeptide: GTPase Der (447 aa).

EngA-type G domains lie at 3–167 and 180–353; these read PVIA…ALPE and IRLA…KSAN. Residues 9-16, 56-60, 119-122, 186-193, 233-237, and 298-301 contribute to the GTP site; these read GRPNVGKS, DTGGF, NKAE, DTAGL, and NKWD. A KH-like domain is found at 354 to 438; sequence RKMPTPVLTR…PLRIEMKTSS (85 aa).

Belongs to the TRAFAC class TrmE-Era-EngA-EngB-Septin-like GTPase superfamily. EngA (Der) GTPase family. Associates with the 50S ribosomal subunit.

GTPase that plays an essential role in the late steps of ribosome biogenesis. This is GTPase Der from Acidovorax ebreus (strain TPSY) (Diaphorobacter sp. (strain TPSY)).